The primary structure comprises 136 residues: MGEMEREGATAKVGAGKVGAGKVGAAKAGAAPAAAQGAGTKVVAAQGAGTKVVAAQGAGAKAAAVGVGKVGAGAKAVGGTIWSGKGLALGLGMGLGAWGPLILGVVGAGAVYAYMKSRDIEAAQSDEEVELRDALS.

Residues M1–K85 are Cytoplasmic-facing. The tract at residues G86 to L95 is GL repeat. A helical membrane pass occupies residues G86–V106. Residues G107 to S136 lie on the Lumenal side of the membrane. Residues M115–S136 are MIC, self-assembles, binds magnetite, Fe(2+) and Fe(3+).

This sequence belongs to the magnetosome Mms6 family. As to quaternary structure, full length protein oligomerizes and interacts with MamA. In terms of processing, may undergo cleavage.

The protein resides in the magnetosome membrane. In terms of biological role, promotes the formation of magnetite in Fe(2+)-rich conditions, when magnetite is not readily formed. Binds both Fe(2+) and Fe(3+). May help control the production of crystals with a specific morphology. May function with MamX, MamY amd MamZ in biomineralization. The 4 genes of this operon collectively influence magnetosome size and number. This chain is Magnetite biomineralization protein Mms6, found in Magnetospirillum gryphiswaldense (strain DSM 6361 / JCM 21280 / NBRC 15271 / MSR-1).